The chain runs to 201 residues: MTERTGKFAGDNPFTIAESWLAEAQESEVNDPNAIALSTVDADGMPNARMVLLKGVEPDAFVFYTNYESAKARELDGAGKAAFVMHWKSLRRQIRVRGHVSREDGDAADAYFASRSLKSRLGAWASKQSRPLSSRAALMAEVAKMTATHGTNPKRPPFWGGFRITPVEIEFWADGDFRLHDRFVWRRETPQSEWHVTRLNP.

FMN is bound by residues 49–54 (RMVLLK), 64–65 (YT), K71, and Q93. A substrate-binding site is contributed by K54. Positions 111, 115, and 119 each coordinate substrate. FMN-binding positions include 128 to 129 (QS) and W172. Residue 178–180 (RLH) coordinates substrate. R182 is a binding site for FMN.

It belongs to the pyridoxamine 5'-phosphate oxidase family. As to quaternary structure, homodimer. FMN is required as a cofactor.

It carries out the reaction pyridoxamine 5'-phosphate + O2 + H2O = pyridoxal 5'-phosphate + H2O2 + NH4(+). The catalysed reaction is pyridoxine 5'-phosphate + O2 = pyridoxal 5'-phosphate + H2O2. The protein operates within cofactor metabolism; pyridoxal 5'-phosphate salvage; pyridoxal 5'-phosphate from pyridoxamine 5'-phosphate: step 1/1. It functions in the pathway cofactor metabolism; pyridoxal 5'-phosphate salvage; pyridoxal 5'-phosphate from pyridoxine 5'-phosphate: step 1/1. In terms of biological role, catalyzes the oxidation of either pyridoxine 5'-phosphate (PNP) or pyridoxamine 5'-phosphate (PMP) into pyridoxal 5'-phosphate (PLP). The polypeptide is Pyridoxine/pyridoxamine 5'-phosphate oxidase (Roseobacter denitrificans (strain ATCC 33942 / OCh 114) (Erythrobacter sp. (strain OCh 114))).